The primary structure comprises 198 residues: Protein-L-isoaspartate O-methyltransferase (198 aa).

Ser50 is an active-site residue.

This sequence belongs to the methyltransferase superfamily. L-isoaspartyl/D-aspartyl protein methyltransferase family.

It is found in the cytoplasm. The enzyme catalyses [protein]-L-isoaspartate + S-adenosyl-L-methionine = [protein]-L-isoaspartate alpha-methyl ester + S-adenosyl-L-homocysteine. Functionally, catalyzes the methyl esterification of L-isoaspartyl residues in peptides and proteins that result from spontaneous decomposition of normal L-aspartyl and L-asparaginyl residues. It plays a role in the repair and/or degradation of damaged proteins. This is Protein-L-isoaspartate O-methyltransferase from Thermosipho melanesiensis (strain DSM 12029 / CIP 104789 / BI429).